The primary structure comprises 308 residues: MLNILGKRYLFFAISLAMIIPGLIVMAIFGLPLSIDFKGGSLLEVEFASKTLPAPAEVVALYNDLGITDAQVTTTGNNTLLVRSSFIDDDVRAKVVQEMNSRFNDTVTVLRFDSVGPTIGKEVAGRATLAVSIAALAVIIYITWAFRGVHNAFRYGVCAIIAMIHDVLVVISLVSIGGVLFGWQVDALFLTALLSVIGFSVQDKVVVFDRIRENSQIYRKLDFEKLANHSIVQTLQRSINTQLMTVEYMLLAIALFGGITLREFAIILLVGLFMGTYSSIFIAAPSLVIWESGEWRNWFKRGAKPASA.

Transmembrane regions (helical) follow at residues 10–30 (LFFA…AIFG), 129–149 (LAVS…FRGV), 160–180 (IIAM…GGVL), 181–201 (FGWQ…GFSV), 241–261 (TQLM…GITL), and 264–284 (FAII…FIAA).

The protein belongs to the SecD/SecF family. SecF subfamily. In terms of assembly, forms a complex with SecD. Part of the essential Sec protein translocation apparatus which comprises SecA, SecYEG and auxiliary proteins SecDF. Other proteins may also be involved.

The protein localises to the cell membrane. Its function is as follows. Part of the Sec protein translocase complex. Interacts with the SecYEG preprotein conducting channel. SecDF uses the proton motive force (PMF) to complete protein translocation after the ATP-dependent function of SecA. The polypeptide is Protein translocase subunit SecF (Anaerolinea thermophila (strain DSM 14523 / JCM 11388 / NBRC 100420 / UNI-1)).